The chain runs to 456 residues: Phospholipase A1 member A (456 aa).

The first 25 residues, 1–25 (MRPGLWETCFWLWGPLLWLSIGSSG), serve as a signal peptide directing secretion. Residue Ser-166 is the Nucleophile of the active site. The Charge relay system role is filled by Asp-190. A disulfide bridge connects residues Cys-245 and Cys-258. The active-site Charge relay system is His-260. 2 disulfides stabilise this stretch: Cys-282/Cys-293 and Cys-296/Cys-304. An N-linked (GlcNAc...) asparagine glycan is attached at Asn-365.

It belongs to the AB hydrolase superfamily. Lipase family.

It localises to the secreted. The catalysed reaction is a 1,2-diacyl-sn-glycero-3-phospho-L-serine + H2O = a 2-acyl-sn-glycero-3-phospho-L-serine + a fatty acid + H(+). It catalyses the reaction 1,2-di-(9Z)-octadecenoyl-sn-glycero-3-phospho-L-serine + H2O = 2-(9Z-octadecenoyl)-sn-glycero-3-phospho-L-serine + (9Z)-octadecenoate + H(+). The enzyme catalyses 1-hexadecanoyl-2-(5Z,8Z,11Z,14Z-eicosatetraenoyl)-sn-glycero-3-phospho-L-serine + H2O = 2-(5Z,8Z,11Z,14Z)-eicosatetraenoyl-sn-glycero-3-phospho-L-serine + hexadecanoate + H(+). It carries out the reaction a 1-acyl-sn-glycero-3-phospho-L-serine + H2O = sn-glycero-3-phospho-L-serine + a fatty acid + H(+). The catalysed reaction is 1-(9Z-octadecenoyl)-sn-glycero-3-phospho-L-serine + H2O = sn-glycero-3-phospho-L-serine + (9Z)-octadecenoate + H(+). Functionally, hydrolyzes the ester bond of the acyl group attached at the sn-1 position of phosphatidylserines (phospholipase A1 activity) and 1-acyl-2-lysophosphatidylserines (lysophospholipase activity) in the pathway of phosphatidylserines acyl chain remodeling. Cleaves phosphatidylserines exposed on the outer leaflet of the plasma membrane of apoptotic cells producing 2-acyl-1-lysophosphatidylserines, which in turn enhance mast cell activation and histamine production. Has no activity toward other glycerophospholipids including phosphatidylcholines, phosphatidylethanolamines, phosphatidic acids or phosphatidylinositols, or glycerolipids such as triolein. In Mus musculus (Mouse), this protein is Phospholipase A1 member A.